We begin with the raw amino-acid sequence, 185 residues long: Peptide methionine sulfoxide reductase MsrA (185 aa).

C12 is an active-site residue.

Belongs to the MsrA Met sulfoxide reductase family.

The catalysed reaction is L-methionyl-[protein] + [thioredoxin]-disulfide + H2O = L-methionyl-(S)-S-oxide-[protein] + [thioredoxin]-dithiol. The enzyme catalyses [thioredoxin]-disulfide + L-methionine + H2O = L-methionine (S)-S-oxide + [thioredoxin]-dithiol. Its function is as follows. Has an important function as a repair enzyme for proteins that have been inactivated by oxidation. Catalyzes the reversible oxidation-reduction of methionine sulfoxide in proteins to methionine. This chain is Peptide methionine sulfoxide reductase MsrA, found in Granulibacter bethesdensis (strain ATCC BAA-1260 / CGDNIH1).